The chain runs to 416 residues: Tryptophan synthase beta chain (416 aa).

Positions 1-23 (MTSTLPSQPKDMELANSSRPSVH) are disordered. An N6-(pyridoxal phosphate)lysine modification is found at K109.

This sequence belongs to the TrpB family. In terms of assembly, tetramer of two alpha and two beta chains. It depends on pyridoxal 5'-phosphate as a cofactor.

It carries out the reaction (1S,2R)-1-C-(indol-3-yl)glycerol 3-phosphate + L-serine = D-glyceraldehyde 3-phosphate + L-tryptophan + H2O. The protein operates within amino-acid biosynthesis; L-tryptophan biosynthesis; L-tryptophan from chorismate: step 5/5. Functionally, the beta subunit is responsible for the synthesis of L-tryptophan from indole and L-serine. The protein is Tryptophan synthase beta chain of Prochlorococcus marinus (strain MIT 9211).